A 152-amino-acid chain; its full sequence is Synaptobrevin (152 aa).

The segment covering 1 to 16 has biased composition (polar residues); the sequence is MENNEAPSPSGSNNND. Residues 1–30 form a disordered region; the sequence is MENNEAPSPSGSNNNDFPILPPPPNANDNY. The Cytoplasmic segment spans residues 1–110; that stretch reads MENNEAPSPS…KRKQWWANMK (110 aa). The 61-residue stretch at 47–107 folds into the v-SNARE coiled-coil homology domain; it reads KLQQTQAKVD…GKLKRKQWWA (61 aa). The chain crosses the membrane as a helical; Anchor for type IV membrane protein span at residues 111–130; it reads MMIILGVIAVVLLIIVLVSV. Residues 131 to 152 are Vesicular-facing; it reads WPSSSDSGSGGGNKAITQAPPH. The segment at 133–152 is disordered; it reads SSSDSGSGGGNKAITQAPPH.

This sequence belongs to the synaptobrevin family. In terms of assembly, part of the SNARE core complex containing Snap25 and syntaxin. In terms of processing, ubiquitinated by gzl, regulating endocytic trafficking. In wing imaginal disks, ubiquitination by gzl promotes transcytosis of wingless (wg) to the basolateral surface. As to expression, not nervous system-specific; abundant in cells of the gut and Malpighian tubules.

The protein resides in the cytoplasmic vesicle. Its subcellular location is the secretory vesicle. It localises to the synaptic vesicle membrane. The protein localises to the cell membrane. Involved in the targeting and/or fusion of transport vesicles to their target membrane. This is Synaptobrevin from Drosophila melanogaster (Fruit fly).